The following is a 314-amino-acid chain: MSKFLLNRCIRDLSPLTVLKDNLQQTAKPILNYYAKNAASRGIKVLFISYETLEKEAPEGIDCFLYATSWEKVKSLKELYEHISSWRTQGKQHIVMIDTINPILNTSISSFTMFFGSVLALGSICFLTSFHKDVTLENYPSYLPPCEVFLDFTSTCTVSLIGMQHLSVEHDAKMRSLPNPLLEELQDDKIISLLGSNCETAIVLHVEFRKKSGRIIKESCVLKNGKLEPYTPFEETARGPEPADNQIDFNVSFNLNVSEKERKERDKVFLPYFSAQMVGSQHKSSFVDEGTIIYHADEADDFDEEEDADEDLLI.

Belongs to the ELP5 family. As to quaternary structure, component of the elongator complex.

It localises to the cytoplasm. The protein localises to the nucleus. The protein operates within tRNA modification; 5-methoxycarbonylmethyl-2-thiouridine-tRNA biosynthesis. In terms of biological role, component of the elongator complex, a multiprotein complex which is required for multiple tRNA modifications, including mcm5U (5-methoxycarbonylmethyl uridine), mcm5s2U (5-methoxycarbonylmethyl-2-thiouridine), and ncm5U (5-carbamoylmethyl uridine). The elongator complex catalyzes formation of carboxymethyluridine in the wobble base at position 34 in tRNAs. The chain is Elongator complex protein 5 (iki1) from Schizosaccharomyces pombe (strain 972 / ATCC 24843) (Fission yeast).